A 640-amino-acid polypeptide reads, in one-letter code: Threonine--tRNA ligase (640 aa).

The region spanning 1–61 (MPVITLPDGS…SNDATLQIIT (61 aa)) is the TGS domain. Positions 242-533 (DHRKIGKQLD…LIEHYAGVFP (292 aa)) are catalytic. Positions 333, 384, and 510 each coordinate Zn(2+).

The protein belongs to the class-II aminoacyl-tRNA synthetase family. Homodimer. It depends on Zn(2+) as a cofactor.

The protein resides in the cytoplasm. The catalysed reaction is tRNA(Thr) + L-threonine + ATP = L-threonyl-tRNA(Thr) + AMP + diphosphate + H(+). Its function is as follows. Catalyzes the attachment of threonine to tRNA(Thr) in a two-step reaction: L-threonine is first activated by ATP to form Thr-AMP and then transferred to the acceptor end of tRNA(Thr). Also edits incorrectly charged L-seryl-tRNA(Thr). This is Threonine--tRNA ligase from Pseudomonas putida (strain GB-1).